A 332-amino-acid polypeptide reads, in one-letter code: L-lactate dehydrogenase A chain (332 aa).

Residues 29 to 57 and Arg99 contribute to the NAD(+) site; that span reads GMVG…MEDK. Positions 106, 138, and 169 each coordinate substrate. Asn138 is an NAD(+) binding site. The active-site Proton acceptor is the His193. Thr248 contacts substrate.

The protein belongs to the LDH/MDH superfamily. LDH family. As to quaternary structure, homotetramer.

The protein resides in the cytoplasm. The enzyme catalyses (S)-lactate + NAD(+) = pyruvate + NADH + H(+). The protein operates within fermentation; pyruvate fermentation to lactate; (S)-lactate from pyruvate: step 1/1. Interconverts simultaneously and stereospecifically pyruvate and lactate with concomitant interconversion of NADH and NAD(+). The chain is L-lactate dehydrogenase A chain (ldha) from Sphyraena idiastes (Pelican barracuda).